A 508-amino-acid chain; its full sequence is Photosystem II CP47 reaction center protein (508 aa).

The next 6 membrane-spanning stretches (helical) occupy residues 21 to 36 (AVHIMHTALVSGWAGS), 101 to 115 (IVFSGLCFLAAIWHW), 140 to 156 (GIHLFLAGVACFGFGAF), 203 to 218 (IAAGTLGILAGLFHLS), 237 to 252 (VLSSSIAAVFFAAFVV), and 457 to 472 (TFALLFFFGHIWHGAR).

The protein belongs to the PsbB/PsbC family. PsbB subfamily. As to quaternary structure, PSII is composed of 1 copy each of membrane proteins PsbA, PsbB, PsbC, PsbD, PsbE, PsbF, PsbH, PsbI, PsbJ, PsbK, PsbL, PsbM, PsbT, PsbX, PsbY, PsbZ, Psb30/Ycf12, at least 3 peripheral proteins of the oxygen-evolving complex and a large number of cofactors. It forms dimeric complexes. Requires Binds multiple chlorophylls. PSII binds additional chlorophylls, carotenoids and specific lipids. as cofactor.

The protein resides in the plastid. The protein localises to the chloroplast thylakoid membrane. Functionally, one of the components of the core complex of photosystem II (PSII). It binds chlorophyll and helps catalyze the primary light-induced photochemical processes of PSII. PSII is a light-driven water:plastoquinone oxidoreductase, using light energy to abstract electrons from H(2)O, generating O(2) and a proton gradient subsequently used for ATP formation. In Secale cereale (Rye), this protein is Photosystem II CP47 reaction center protein.